The primary structure comprises 312 residues: MSAPHNVLTKKNPRRGRFAFPRRRVRAGSIDEVVQLLRLPANIANGIHTRHKKCWNDFRGGGGGGGGSRVDGTRAFVDLYGLGYLCNRTNSTLADYLCTLFVAEAYRDACCAQPPAPFPDYNASPPDCRPPLPPQPPCKPNDSELLDRIVRQNDLILNGLNQLCLNHSNHHFELSNILNSIKLQNVNIINQLSQIFDDGVLSGLDEKLSRLIADLDGHFADFGSALDAALAQLQDSLRNDLTNINSILANLTSSLTNINSTINNLLQTLQNLGLGEVGAKLNDVQSTVDRILGVLTPEIVAAAAAAAAKRAH.

Belongs to the baculoviridae PE family.

The protein localises to the virion membrane. Functionally, major component of the polyhedra envelope. In Lymantria dispar multicapsid nuclear polyhedrosis virus (LdMNPV), this protein is Polyhedral envelope protein.